The sequence spans 163 residues: Antimicrobial peptide 2 (163 aa).

The first 22 residues, 1-22, serve as a signal peptide directing secretion; the sequence is MLNMKSFALLMLFATLVGVTIA. Chitin-binding type-1 domains are found at residues 26–66 and 69–107; these read NGKC…EIEP and AGQC…SCLP. Intrachain disulfides connect cysteine 29–cysteine 42, cysteine 36–cysteine 48, and cysteine 41–cysteine 55. A propeptide spanning residues 58 to 67 is cleaved from the precursor; it reads NTPLSEIEPT. 4 cysteine pairs are disulfide-bonded: cysteine 72-cysteine 83, cysteine 77-cysteine 89, cysteine 82-cysteine 96, and cysteine 101-cysteine 105. Positions 100–163 are excised as a propeptide; sequence MCQGSCLPDM…QVEPAVTKAP (64 aa).

Expressed in roots, flowers, stem and leaves.

Its function is as follows. Antimicrobial peptide. In Stellaria media (Common chickweed), this protein is Antimicrobial peptide 2.